A 220-amino-acid chain; its full sequence is Large ribosomal subunit protein uL6c (220 aa).

The N-terminal 38 residues, 1-38 (MSLPLPSHMKSVFLGMKVEISTSVPVTRIGFWRKSVDC), are a transit peptide targeting the chloroplast.

As to quaternary structure, component of the chloroplast large ribosomal subunit (LSU). Mature 70S chloroplast ribosomes of higher plants consist of a small (30S) and a large (50S) subunit. The 30S small subunit contains 1 molecule of ribosomal RNA (16S rRNA) and 24 different proteins. The 50S large subunit contains 3 rRNA molecules (23S, 5S and 4.5S rRNA) and 33 different proteins.

The protein localises to the plastid. Its subcellular location is the chloroplast. Component of the chloroplast ribosome (chloro-ribosome), a dedicated translation machinery responsible for the synthesis of chloroplast genome-encoded proteins, including proteins of the transcription and translation machinery and components of the photosynthetic apparatus. The polypeptide is Large ribosomal subunit protein uL6c (RPL6) (Spinacia oleracea (Spinach)).